A 24-amino-acid polypeptide reads, in one-letter code: Lactadherin (24 aa).

It localises to the membrane. It is found in the secreted. The protein localises to the cytoplasmic vesicle. The protein resides in the secretory vesicle. Its subcellular location is the acrosome membrane. Functionally, specific ligand for the alpha-v/beta-3 and alpha-v/beta-5 receptors. Also binds to phosphatidylserine-enriched cell surfaces in a receptor-independent manner. Zona pellucida-binding protein which may play a role in gamete interaction. Contributes to phagocytic removal of apoptotic cells in many tissues. Plays an important role in the maintenance of intestinal epithelial homeostasis and the promotion of mucosal healing. Promotes VEGF-dependent neovascularization. The protein is Lactadherin of Equus asinus (Donkey).